The sequence spans 225 residues: Cytidylate kinase (225 aa).

12–20 (GPSGAGKGT) contributes to the ATP binding site.

It belongs to the cytidylate kinase family. Type 1 subfamily.

It is found in the cytoplasm. It catalyses the reaction CMP + ATP = CDP + ADP. It carries out the reaction dCMP + ATP = dCDP + ADP. This Stenotrophomonas maltophilia (strain R551-3) protein is Cytidylate kinase.